Consider the following 908-residue polypeptide: Transferrin-binding protein A (908 aa).

A signal peptide spans 1-24 (MQQQHLFRLNILCLSLMTALPVYA). Positions 38-45 (DTIQVKAK) match the TonB box motif. The region spanning 51 to 176 (RDNEVTGLGK…LAGSVAFQTK (126 aa)) is the TBDR plug domain. The region spanning 187-908 (QWGIQSKTAY…NYTFSLEMKF (722 aa)) is the TBDR beta-barrel domain. A TonB C-terminal box motif is present at residues 891–908 (NRYAAPGRNYTFSLEMKF).

It belongs to the TonB-dependent receptor family. In terms of assembly, binds both human apo- and holo-transferrin (TF), via the TF C-terminus. Forms a large complex with TF and TbpB.

The protein localises to the cell outer membrane. Neisseria acquires iron by extracting it from serum transferrin (TF) in its human host. Acts as a TF receptor and is required for TF utilization. Binds both apo- and holo-TF, via the TF C-terminus. The protein is Transferrin-binding protein A of Neisseria meningitidis serogroup B.